Consider the following 844-residue polypeptide: MKSLNFQSVVSQFFEYESTVVVRWPLPFIIIPPLLTFSIVTLTVTNFHLNVTNDTLQVFLPDDMRSLRDLKELLRLFPPRDAQRDTYSIFGSKFVYTVIEDDSSDGNILSSSGIQRMSKLHKFVMGLETSLGDNVASNCLRNKDDEACTMHPIAFALEDTTPEFAIQFLLRYPNLKFGDFVIDNAMVFGDVRIEPKSQDRDGNSPIRSSKAVRMTYILESSESTERWIDLFLSAIPRYKETNSTIFWSSSKSLAKEMERNGELLIPWMPWTSLVLVVFCMFACSSLNIVKSQPFIGFFAMFNATMATIASTSLLLYLQYPFLPLVFIMPFLVVSIGTDNMFLMLKSWRMTKKSSNEEQRYIHALTESAASLFLTSLTDGLSFAIGSISDFHAVRVFCTYCAMAILFMFLFQVTFFNAVMSLCCRREVSGKHPVFCCYEITPPEETQVLEKQSNFDFSSIVAKHLFKILNPLPSRIGVFFIFLAYLFISIHFAIGLPLGLDLKLLAPDDSYVSKELEAQERLFADYGGFCFALVRAENISLKDPMVRRNLIGLYRDLGGSEYSSPSEFWLDPFEKKNRGKKYSESDFSDELHTFLAKEPHLKFRNDIRFTMMGKIEAMKMMFRVRKLGKDNDAPRAEYMRKVMENSQFNGFVYDTSFLLVDQQMTTVYNVIVDVVSAILTMLSICVLMVPRPVSAMCIAFAILSVNIGVIGALAATNTRLDIISMITIVMSVGFSVDYVTHTTFHFVIQRDNRLEKCLLVMTEPILQSALSTAIGVSLLSFVHSYIVRTFVNTVFFVVGLGILHGLIFLPVLLDTIVPDSEYMVPYEPQHEDEENPNHYEDLYGL.

The SSD domain occupies 264–421 (LIPWMPWTSL…VTFFNAVMSL (158 aa)).

It belongs to the patched family.

The chain is Patched-related protein 9 (ptr-9) from Caenorhabditis elegans.